Consider the following 466-residue polypeptide: Glutamate decarboxylase beta (466 aa).

Threonine 62 and asparagine 83 together coordinate substrate. Residues 126–127, threonine 212, and histidine 275 each bind pyridoxal 5'-phosphate; that span reads SS. Residue lysine 276 is modified to N6-(pyridoxal phosphate)lysine. N6-acetyllysine is present on residues lysine 446, lysine 453, and lysine 464.

Belongs to the group II decarboxylase family. In terms of assembly, homohexamer composed of three dimers. Pyridoxal 5'-phosphate serves as cofactor.

The enzyme catalyses L-glutamate + H(+) = 4-aminobutanoate + CO2. Converts glutamate to gamma-aminobutyrate (GABA), consuming one intracellular proton in the reaction. The gad system helps to maintain a near-neutral intracellular pH when cells are exposed to extremely acidic conditions. The ability to survive transit through the acidic conditions of the stomach is essential for successful colonization of the mammalian host by commensal and pathogenic bacteria. The protein is Glutamate decarboxylase beta (gadB) of Escherichia coli O6:H1 (strain CFT073 / ATCC 700928 / UPEC).